We begin with the raw amino-acid sequence, 414 residues long: MAAAAVAGVAGLTTAHAKRLLREEDMTTVEFQTSEEVDVTPTFDTMGLREDLLRGIYAYGFEKPSAIQQKAIKQIIKGRDVIAQSQSGTGKTATFCVSVLQCLDIQIRETQALILAPTKELARQIQKVLLALGDYMNVQCHACIGGTNVGEDIRKLDYGQHVVAGTPGRVFDMIRRRSLRTRAIKMLVLDEADEMLNKGFKEQIYDVYRYLPPATQVCLISATLPHEILEMTNKFMTDPIRILVKRDELTLEGIKQFFVAVEREEWKFDTLCDLYDTLTITQAVIFCNTKRKVDWLTEKMREANFTVSSMHGDMPQKERESIMKEFRSGASRVLISTDVWARGLDVPQVSLIINYDLPNNRELYIHRIGRSGRYGRKGVAINFVKNDDIRILRDIEQYYSTQIDEMPMNVADLI.

Residues 41-69 carry the Q motif motif; the sequence is PTFDTMGLREDLLRGIYAYGFEKPSAIQQ. ATP is bound by residues Lys-63, Gln-68, 85 to 92, and 88 to 93; these read SQSGTGKT and GTGKTA. The region spanning 72-242 is the Helicase ATP-binding domain; sequence IKQIIKGRDV…NKFMTDPIRI (171 aa). A DEAD box motif is present at residues 190–193; that stretch reads DEAD. One can recognise a Helicase C-terminal domain in the interval 253-414; sequence GIKQFFVAVE…EMPMNVADLI (162 aa). Residues Asp-345 and 370–374 contribute to the ATP site; that span reads RSGRY.

The protein belongs to the DEAD box helicase family. In terms of assembly, identified in the spliceosome C complex. Part of the mRNA splicing-dependent exon junction complex (EJC) complex; the core complex contains casc3, eif4a3, magoh and rbm8a.

It is found in the nucleus. The protein localises to the nucleus speckle. It localises to the cytoplasm. The catalysed reaction is ATP + H2O = ADP + phosphate + H(+). In terms of biological role, ATP-dependent RNA helicase. Involved in pre-mRNA splicing as component of the spliceosome. Core component of the splicing-dependent multiprotein exon junction complex (EJC) deposited at splice junctions on mRNAs. The EJC is a dynamic structure consisting of core proteins and several peripheral nuclear and cytoplasmic associated factors that join the complex only transiently either during EJC assembly or during subsequent mRNA metabolism. The EJC marks the position of the exon-exon junction in the mature mRNA for the gene expression machinery and the core components remain bound to spliced mRNAs throughout all stages of mRNA metabolism thereby influencing downstream processes including nuclear mRNA export, subcellular mRNA localization, translation efficiency and nonsense-mediated mRNA decay (NMD). Binds spliced mRNA in sequence-independent manner, 20-24 nucleotides upstream of mRNA exon-exon junctions. Involved in craniofacial development. When overexpressed, induces epidermis in dissociated cells that would otherwise adopt a neural fate, a process that requires an active BMP signaling pathway. This chain is Eukaryotic initiation factor 4A-III-B (eif4a3-b), found in Xenopus laevis (African clawed frog).